The following is a 429-amino-acid chain: Adenylosuccinate synthetase (429 aa).

Residues Gly12–Lys18 and Gly40–Thr42 contribute to the GTP site. Catalysis depends on Asp13, which acts as the Proton acceptor. Positions 13 and 40 each coordinate Mg(2+). IMP contacts are provided by residues Asp13–Lys16, Asn38–His41, Thr128, Arg142, Gln223, Thr238, and Arg302. The Proton donor role is filled by His41. Val298–Arg304 lines the substrate pocket. Residues Arg304, Lys330–Asp332, and Gly412–Gly414 each bind GTP.

Belongs to the adenylosuccinate synthetase family. Homodimer. Mg(2+) is required as a cofactor.

The protein resides in the cytoplasm. It carries out the reaction IMP + L-aspartate + GTP = N(6)-(1,2-dicarboxyethyl)-AMP + GDP + phosphate + 2 H(+). The protein operates within purine metabolism; AMP biosynthesis via de novo pathway; AMP from IMP: step 1/2. Its function is as follows. Plays an important role in the de novo pathway of purine nucleotide biosynthesis. Catalyzes the first committed step in the biosynthesis of AMP from IMP. In Pseudarthrobacter chlorophenolicus (strain ATCC 700700 / DSM 12829 / CIP 107037 / JCM 12360 / KCTC 9906 / NCIMB 13794 / A6) (Arthrobacter chlorophenolicus), this protein is Adenylosuccinate synthetase.